Reading from the N-terminus, the 238-residue chain is Small ribosomal subunit protein uS2 (238 aa).

This sequence belongs to the universal ribosomal protein uS2 family.

This is Small ribosomal subunit protein uS2 from Prochlorococcus marinus (strain MIT 9211).